The following is a 119-amino-acid chain: Small ribosomal subunit protein bS16 (119 aa).

It belongs to the bacterial ribosomal protein bS16 family.

The sequence is that of Small ribosomal subunit protein bS16 from Chlamydia abortus (strain DSM 27085 / S26/3) (Chlamydophila abortus).